A 627-amino-acid chain; its full sequence is tRNA uridine 5-carboxymethylaminomethyl modification enzyme MnmG (627 aa).

Residues glycine 13–glycine 18, valine 125, and serine 180 each bind FAD. Glycine 274–phenylalanine 288 serves as a coordination point for NAD(+). Residue glutamine 371 participates in FAD binding.

This sequence belongs to the MnmG family. In terms of assembly, homodimer. Heterotetramer of two MnmE and two MnmG subunits. FAD serves as cofactor.

It localises to the cytoplasm. In terms of biological role, NAD-binding protein involved in the addition of a carboxymethylaminomethyl (cmnm) group at the wobble position (U34) of certain tRNAs, forming tRNA-cmnm(5)s(2)U34. The chain is tRNA uridine 5-carboxymethylaminomethyl modification enzyme MnmG from Francisella tularensis subsp. holarctica (strain FTNF002-00 / FTA).